The primary structure comprises 98 residues: MASLLCCGPKLAACGIVLSAWGVIMLIMLGIFFNVHSAVLIEDVPFTEKDFENGPQNIYNLYEQVSYNCFIAASLYLLLGGFSFCQVRLNKRKEYMVR.

Transmembrane regions (helical) follow at residues 13-33 and 65-85; these read ACGIVLSAWGVIMLIMLGIFF and VSYNCFIAASLYLLLGGFSFC.

This sequence belongs to the RNase K family. As to quaternary structure, interacts with the proton translocation complex V0 of the V-ATPase. Interacts with ATP6AP1. In terms of tissue distribution, expressed in brain (at protein level).

The protein resides in the endomembrane system. The protein localises to the cytoplasmic vesicle. It is found in the clathrin-coated vesicle membrane. Functionally, endoribonuclease which preferentially cleaves ApU and ApG phosphodiester bonds. Hydrolyzes UpU bonds at a lower rate. Regulates the activity of vacuolar (H+)-ATPase (V-ATPase) which is responsible for acidifying and maintaining the pH of intracellular compartments. Required at an early stage of receptor-mediated endocytosis. This Bos taurus (Bovine) protein is Ribonuclease kappa (RNASEK).